A 407-amino-acid chain; its full sequence is 3-oxoacyl-[acyl-carrier-protein] synthase 1 (407 aa).

One can recognise a Ketosynthase family 3 (KS3) domain in the interval 1–405; that stretch reads MKRVVITGLG…GTNVSLIIKK (405 aa). Residues cysteine 164, histidine 299, and histidine 335 each act as for beta-ketoacyl synthase activity in the active site.

This sequence belongs to the thiolase-like superfamily. Beta-ketoacyl-ACP synthases family. In terms of assembly, homodimer.

Its subcellular location is the cytoplasm. The enzyme catalyses a fatty acyl-[ACP] + malonyl-[ACP] + H(+) = a 3-oxoacyl-[ACP] + holo-[ACP] + CO2. The catalysed reaction is (3Z)-decenoyl-[ACP] + malonyl-[ACP] + H(+) = 3-oxo-(5Z)-dodecenoyl-[ACP] + holo-[ACP] + CO2. Its pathway is lipid metabolism; fatty acid biosynthesis. Involved in the type II fatty acid elongation cycle. Catalyzes the elongation of a wide range of acyl-ACP by the addition of two carbons from malonyl-ACP to an acyl acceptor. Can also use unsaturated fatty acids. Catalyzes a key reaction in unsaturated fatty acid (UFA) synthesis, the elongation of the cis-3-decenoyl-ACP produced by FabA. The sequence is that of 3-oxoacyl-[acyl-carrier-protein] synthase 1 (fabB) from Buchnera aphidicola subsp. Baizongia pistaciae (strain Bp).